Consider the following 177-residue polypeptide: Large ribosomal subunit protein bL9 (177 aa).

It belongs to the bacterial ribosomal protein bL9 family.

In terms of biological role, binds to the 23S rRNA. This Rhodopirellula baltica (strain DSM 10527 / NCIMB 13988 / SH1) protein is Large ribosomal subunit protein bL9.